We begin with the raw amino-acid sequence, 776 residues long: Outer capsid protein VP4 (776 aa).

Positions 65-224 (LDGPYQPTTF…KCTEYINTGL (160 aa)) are spike head. 2 disulfide bridges follow: cysteine 203/cysteine 216 and cysteine 318/cysteine 380. The segment at 248 to 479 (AQVNEDILIS…LISLVPSNDD (232 aa)) is spike body and stalk (antigen domain). Positions 389-409 (LPVGHYPVMTGGAVTLHSAGV) are hydrophobic; possible role in virus entry into host cell. Positions 448-450 (YGL) match the YGL motif; interaction with ITGA4 motif. Residues 484–511 (IMNSVTVRQDLERQLSELRDEFNSLSQQ) are a coiled coil. The segment at 510 to 776 (QQIAMSQLID…IENLIMQCRL (267 aa)) is spike foot. The KID motif; interaction with HSPA8 signature appears at 644–646 (KID).

It belongs to the rotavirus VP4 family. In terms of assembly, homotrimer. VP4 adopts a dimeric appearance above the capsid surface, while forming a trimeric base anchored inside the capsid layer. Only hints of the third molecule are observed above the capsid surface. It probably performs a series of molecular rearrangements during viral entry. Prior to trypsin cleavage, it is flexible. The priming trypsin cleavage triggers its rearrangement into rigid spikes with approximate two-fold symmetry of their protruding parts. After an unknown second triggering event, cleaved VP4 may undergo another rearrangement, in which two VP5* subunits fold back on themselves and join a third subunit to form a tightly associated trimer, shaped like a folded umbrella. Interacts with VP6. Interacts with VP7. Homotrimer. The trimer is coiled-coil stabilized by its C-terminus, however, its N-terminus, known as antigen domain or 'body', seems to be flexible allowing it to self-associate either as a dimer or a trimer. Post-translationally, proteolytic cleavage by trypsin results in activation of VP4 functions and greatly increases infectivity. The penetration into the host cell is dependent on trypsin treatment of VP4. It produces two peptides, VP5* and VP8* that remain associated with the virion. Cleavage of VP4 by trypsin probably occurs in vivo in the lumen of the intestine prior to infection of enterocytes. Trypsin seems to be incorporated into the three-layered viral particles but remains inactive as long as the viral outer capsid is intact and would only be activated upon the solubilization of the latter.

It localises to the virion. The protein resides in the host rough endoplasmic reticulum. The protein localises to the host cell membrane. It is found in the host cytoplasm. Its subcellular location is the host cytoskeleton. It localises to the host endoplasmic reticulum-Golgi intermediate compartment. Its function is as follows. Spike-forming protein that mediates virion attachment to the host epithelial cell receptors and plays a major role in cell penetration, determination of host range restriction and virulence. Rotavirus attachment and entry into the host cell probably involves multiple sequential contacts between the outer capsid proteins VP4 and VP7, and the cell receptors. It is subsequently lost, together with VP7, following virus entry into the host cell. Following entry into the host cell, low intracellular or intravesicular Ca(2+) concentration probably causes the calcium-stabilized VP7 trimers to dissociate from the virion. This step is probably necessary for the membrane-disrupting entry step and the release of VP4, which is locked onto the virion by VP7. During the virus exit from the host cell, VP4 seems to be required to target the newly formed virions to the host cell lipid rafts. In terms of biological role, forms the spike 'foot' and 'body' and acts as a membrane permeabilization protein that mediates release of viral particles from endosomal compartments into the cytoplasm. During entry, the part of VP5* that protrudes from the virus folds back on itself and reorganizes from a local dimer to a trimer. This reorganization may be linked to membrane penetration by exposing VP5* hydrophobic region. In integrin-dependent strains, VP5* targets the integrin heterodimer ITGA2/ITGB1 for cell attachment. Functionally, forms the head of the spikes and mediates the recognition of specific host cell surface glycans. It is the viral hemagglutinin and an important target of neutralizing antibodies. In sialic acid-dependent strains, VP8* binds to host cell sialic acid, most probably a ganglioside, providing the initial contact. In some other strains, VP8* mediates the attachment to histo-blood group antigens (HBGAs) for viral entry. The polypeptide is Outer capsid protein VP4 (Rotavirus A (isolate RVA/Equine/United Kingdom/L338/1988/G13P12[18]) (RV-A)).